The following is a 317-amino-acid chain: Aspartate carbamoyltransferase catalytic subunit (317 aa).

Residues arginine 66 and threonine 67 each contribute to the carbamoyl phosphate site. Position 94 (lysine 94) interacts with L-aspartate. Residues arginine 116, histidine 144, and glutamine 147 each coordinate carbamoyl phosphate. Positions 177 and 231 each coordinate L-aspartate. Glycine 272 and proline 273 together coordinate carbamoyl phosphate.

It belongs to the aspartate/ornithine carbamoyltransferase superfamily. ATCase family. As to quaternary structure, heterododecamer (2C3:3R2) of six catalytic PyrB chains organized as two trimers (C3), and six regulatory PyrI chains organized as three dimers (R2).

It catalyses the reaction carbamoyl phosphate + L-aspartate = N-carbamoyl-L-aspartate + phosphate + H(+). It functions in the pathway pyrimidine metabolism; UMP biosynthesis via de novo pathway; (S)-dihydroorotate from bicarbonate: step 2/3. In terms of biological role, catalyzes the condensation of carbamoyl phosphate and aspartate to form carbamoyl aspartate and inorganic phosphate, the committed step in the de novo pyrimidine nucleotide biosynthesis pathway. This is Aspartate carbamoyltransferase catalytic subunit from Rhodopseudomonas palustris (strain BisB18).